A 164-amino-acid polypeptide reads, in one-letter code: MEALGINPTLFIAQLINFLLLIFILRALLYRPVMNLLNERTRRIEESVRDAEKVREQLANARRDYEAEIARARQEAAKIVAQAQERAKQQEAEIIAQARREAERLKEEARAQAEQERIRMLSEAKSQIADLVTLTASRVLGAELQARGHDALIAESLAALDRRN.

The chain crosses the membrane as a helical span at residues leucine 4–isoleucine 24.

The protein belongs to the ATPase B chain family. As to quaternary structure, F-type ATPases have 2 components, F(1) - the catalytic core - and F(0) - the membrane proton channel. F(1) has five subunits: alpha(3), beta(3), gamma(1), delta(1), epsilon(1). F(0) has four main subunits: a(1), b(2) and c(10-14). The alpha and beta chains form an alternating ring which encloses part of the gamma chain. F(1) is attached to F(0) by a central stalk formed by the gamma and epsilon chains, while a peripheral stalk is formed by the delta and b chains.

It localises to the cell membrane. F(1)F(0) ATP synthase produces ATP from ADP in the presence of a proton or sodium gradient. F-type ATPases consist of two structural domains, F(1) containing the extramembraneous catalytic core and F(0) containing the membrane proton channel, linked together by a central stalk and a peripheral stalk. During catalysis, ATP synthesis in the catalytic domain of F(1) is coupled via a rotary mechanism of the central stalk subunits to proton translocation. Its function is as follows. Component of the F(0) channel, it forms part of the peripheral stalk, linking F(1) to F(0). In Chloroflexus aurantiacus (strain ATCC 29366 / DSM 635 / J-10-fl), this protein is ATP synthase subunit b.